The primary structure comprises 93 residues: Muconolactone Delta-isomerase (93 aa).

The protein belongs to the muconolactone Delta-isomerase family. Homodecamer.

The enzyme catalyses (S)-muconolactone = (4,5-dihydro-5-oxofuran-2-yl)-acetate. Its pathway is aromatic compound metabolism; beta-ketoadipate pathway; 5-oxo-4,5-dihydro-2-furylacetate from catechol: step 3/3. This is Muconolactone Delta-isomerase (catC) from Rhodococcus opacus (Nocardia opaca).